Consider the following 298-residue polypeptide: Nucleoid occlusion protein (298 aa).

The segment at residues E152 to L171 is a DNA-binding region (H-T-H motif).

Belongs to the ParB family.

The protein localises to the cytoplasm. The protein resides in the nucleoid. Effects nucleoid occlusion by binding relatively nonspecifically to DNA and preventing the assembly of the division machinery in the vicinity of the nucleoid, especially under conditions that disturb the cell cycle. It helps to coordinate cell division and chromosome segregation by preventing the formation of the Z ring through the nucleoid, which would cause chromosome breakage. This chain is Nucleoid occlusion protein, found in Lysinibacillus sphaericus (strain C3-41).